The following is a 391-amino-acid chain: Terminal nucleotidyltransferase 5C (391 aa).

The protein belongs to the TENT family. Interacts with BCCIP and PABPC1; the interaction has no effect on TENT5C poly(A) polymerase function. Interacts with PLK4; this interaction leads to the TENT5C recruitment into the centrosome.

Its subcellular location is the nucleus. It is found in the cytoplasm. The protein localises to the cytoskeleton. The protein resides in the microtubule organizing center. It localises to the centrosome. It carries out the reaction RNA(n) + ATP = RNA(n)-3'-adenine ribonucleotide + diphosphate. In terms of biological role, catalyzes the transfer of one adenosine molecule from an ATP to an mRNA poly(A) tail bearing a 3'-OH terminal group and enhances mRNA stability and gene expression. Can also elongate RNA oligos ending with uridine molecule, provided that the sequence is adenosine-rich. Mainly targets mRNAs encoding endoplasmic reticulum-targeted protein. Its function is as follows. (Microbial infection) Seems to enhance replication of some viruses, including yellow fever virus, in response to type I interferon. In Homo sapiens (Human), this protein is Terminal nucleotidyltransferase 5C.